The following is an 833-amino-acid chain: Disintegrin and metalloproteinase domain-containing protein 17 (833 aa).

The signal sequence occupies residues 1-17; it reads MRQCALFLTSLVPIVLA. Residues 223–474 enclose the Peptidase M12B domain; the sequence is NTCKLLVVAD…KAQECFQERS (252 aa). The segment at 301–345 is interaction with classical swine fever virus envelope glycoprotein E2; sequence AKSYPNEEKDAWDVKMLLEQFSFDIAEEASKVCLAHLFTYQDFDM. 3 cysteine pairs are disulfide-bonded: Cys365–Cys469, Cys423–Cys453, and Cys534–Cys555. His405 lines the Zn(2+) pocket. The active site involves Glu406. Residues His409 and His415 each contribute to the Zn(2+) site. The region spanning 475 to 563 is the Disintegrin domain; that stretch reads NKVCGNSRVD…ECPPPGNAED (89 aa). Residues 672–692 form a helical membrane-spanning segment; it reads IVGSVLVFSLMLWIPVSILVH. 2 disordered regions span residues 735–760 and 772–833; these read TPGR…VPVA and QEDP…ETEC. Basic and acidic residues-rich tracts occupy residues 777–790, 800–816, and 824–833; these read TDSH…EKDP, SFED…EKAS, and SRVDSKETEC.

(Microbial infection) Interacts (via metalloproteinase domain) with classical swine fever virus envelope glycoprotein E2; this interaction allows binding and probably entry of the virus into the cell. In terms of assembly, interacts with MAD2L1, MAPK14 and MUC1. Interacts with iRhom1/RHBDF1 and iRhom2/RHBDF2. Interacts with FRMD8 via its interaction with iRhom1/RHBDF1 and iRhom2/RHBDF2. Zn(2+) is required as a cofactor. Post-translationally, the precursor is cleaved by a furin endopeptidase. In terms of processing, phosphorylated.

It is found in the membrane. It catalyses the reaction Narrow endopeptidase specificity. Cleaves Pro-Leu-Ala-Gln-Ala-|-Val-Arg-Ser-Ser-Ser in the membrane-bound, 26-kDa form of tumor necrosis factor alpha (TNFalpha). Similarly cleaves other membrane-anchored, cell-surface proteins to 'shed' the extracellular domains.. In terms of biological role, transmembrane metalloprotease which mediates the ectodomain shedding of a myriad of transmembrane proteins including adhesion proteins, growth factor precursors and cytokines important for inflammation and immunity. Cleaves the membrane-bound precursor of TNF-alpha to its mature soluble form. Responsible for the proteolytical release of soluble JAM3 from endothelial cells surface. Responsible for the proteolytic release of several other cell-surface proteins, including p75 TNF-receptor, interleukin 1 receptor type II, p55 TNF-receptor, transforming growth factor-alpha, L-selectin, growth hormone receptor, MUC1 and the amyloid precursor protein. Acts as an activator of Notch pathway by mediating cleavage of Notch, generating the membrane-associated intermediate fragment called Notch extracellular truncation (NEXT). Plays a role in the proteolytic processing of ACE2. Plays a role in hemostasis through shedding of GP1BA, the platelet glycoprotein Ib alpha chain. Mediates the proteolytic cleavage of LAG3, leading to release the secreted form of LAG3. Mediates the proteolytic cleavage of IL6R, leading to the release of secreted form of IL6R. Mediates the proteolytic cleavage and shedding of FCGR3A upon NK cell stimulation, a mechanism that allows for increased NK cell motility and detachment from opsonized target cells. Cleaves TREM2, resulting in shedding of the TREM2 ectodomain. Its function is as follows. (Microbial infection) Acts as a receptor for classical swine fever virus. This is Disintegrin and metalloproteinase domain-containing protein 17 (ADAM17) from Sus scrofa (Pig).